The sequence spans 405 residues: Tryptophan synthase beta chain (405 aa).

K98 is modified (N6-(pyridoxal phosphate)lysine).

It belongs to the TrpB family. In terms of assembly, tetramer of two alpha and two beta chains. The cofactor is pyridoxal 5'-phosphate.

The enzyme catalyses (1S,2R)-1-C-(indol-3-yl)glycerol 3-phosphate + L-serine = D-glyceraldehyde 3-phosphate + L-tryptophan + H2O. The protein operates within amino-acid biosynthesis; L-tryptophan biosynthesis; L-tryptophan from chorismate: step 5/5. In terms of biological role, the beta subunit is responsible for the synthesis of L-tryptophan from indole and L-serine. The protein is Tryptophan synthase beta chain of Xanthomonas euvesicatoria pv. vesicatoria (strain 85-10) (Xanthomonas campestris pv. vesicatoria).